A 520-amino-acid chain; its full sequence is Protein OS-9 homolog (520 aa).

The signal sequence occupies residues 1–23; the sequence is MIRRIRTLTPLLVLACAGSGAWA. Positions 121-135 are enriched in polar residues; it reads QVDNGNRDQTNGAES. The interval 121-144 is disordered; that stretch reads QVDNGNRDQTNGAESTSKEDEQRE. Positions 161-302 constitute an MRH domain; that stretch reads GKCMYYISGW…VIYTPRLCND (142 aa). A disulfide bridge connects residues C163 and C176. The a mannooligosaccharide derivative site is built by W170, W171, Q183, D257, R263, E284, and Y290. Intrachain disulfides connect C256/C288 and C271/C300. Residues 442–520 form a disordered region; it reads GLVGTVDSND…SEEIFFKDEL (79 aa). Polar residues predominate over residues 461 to 471; the sequence is GSISQPAQGTT. Positions 473–499 are enriched in basic and acidic residues; the sequence is DKGESNAETGEEKKKADEKIDHYEPEK. A Prevents secretion from ER motif is present at residues 517-520; the sequence is KDEL.

It belongs to the OS-9 family. As to quaternary structure, interacts with missfolded ER lumenal proteins.

The protein localises to the endoplasmic reticulum membrane. Its function is as follows. Lectin involved in the quality control of the secretory pathway. As a member of the endoplasmic reticulum-associated degradation lumenal (ERAD-L) surveillance system, targets misfolded endoplasmic reticulum lumenal glycoproteins for degradation. The polypeptide is Protein OS-9 homolog (yos9) (Aspergillus fumigatus (strain ATCC MYA-4609 / CBS 101355 / FGSC A1100 / Af293) (Neosartorya fumigata)).